Consider the following 119-residue polypeptide: Large ribosomal subunit protein bL20 (119 aa).

Belongs to the bacterial ribosomal protein bL20 family.

Binds directly to 23S ribosomal RNA and is necessary for the in vitro assembly process of the 50S ribosomal subunit. It is not involved in the protein synthesizing functions of that subunit. The sequence is that of Large ribosomal subunit protein bL20 from Cellvibrio japonicus (strain Ueda107) (Pseudomonas fluorescens subsp. cellulosa).